A 294-amino-acid chain; its full sequence is P32 adhesin (294 aa).

2 consecutive transmembrane segments (helical) span residues 11–31 and 66–86; these read LVGVSFVFSGVIALGTGVGLT and VVGAGAGLIVVSLLLGLGIGI. 2 tandem repeats follow at residues 172–193 and 194–214. Positions 172–214 are 2 X 22 AA repeats; the sequence is GGPMQPNQMGMRPGFNQMPPQMGGMPPNQMGMRPGFNQMPPQM. Positions 234-294 are disordered; it reads RPGFRPQPGG…AGFPPQNGPR (61 aa). Residues 241-256 are compositionally biased toward gly residues; that stretch reads PGGGVPMGNKAGGGFN.

The protein resides in the cell projection. It is found in the attachment organelle membrane. Its function is as follows. Adhesin necessary for successful cytadherence and virulence. The protein is P32 adhesin (mgc2) of Mycoplasmoides gallisepticum (strain R(low / passage 15 / clone 2)) (Mycoplasma gallisepticum).